We begin with the raw amino-acid sequence, 209 residues long: Uracil phosphoribosyltransferase (209 aa).

5-phospho-alpha-D-ribose 1-diphosphate contacts are provided by residues Arg77, Arg102, and 129-137 (DPMLATGSS). Residues Ile192 and 197-199 (GDA) each bind uracil. Asp198 contributes to the 5-phospho-alpha-D-ribose 1-diphosphate binding site.

It belongs to the UPRTase family. It depends on Mg(2+) as a cofactor.

It carries out the reaction UMP + diphosphate = 5-phospho-alpha-D-ribose 1-diphosphate + uracil. The protein operates within pyrimidine metabolism; UMP biosynthesis via salvage pathway; UMP from uracil: step 1/1. Allosterically activated by GTP. Its function is as follows. Catalyzes the conversion of uracil and 5-phospho-alpha-D-ribose 1-diphosphate (PRPP) to UMP and diphosphate. The protein is Uracil phosphoribosyltransferase of Metamycoplasma hominis (Mycoplasma hominis).